The sequence spans 332 residues: Monoterpene synthase 25 (332 aa).

Positions 115, 180, 240, 244, and 248 each coordinate Mg(2+). The DDXXXXD motif signature appears at 115–121 (DDPVVFD). Residues 240 to 248 (NDILSFYKE) carry the NSE/DTE motif motif.

It belongs to the trichodiene synthase family. Mg(2+) is required as a cofactor.

In terms of biological role, terpene cyclase that catalyzes the cyclization of geranyl diphosphate (GPP) to myrcene and linalool. The polypeptide is Monoterpene synthase 25 (Postia placenta (strain ATCC 44394 / Madison 698-R) (Brown rot fungus)).